A 228-amino-acid polypeptide reads, in one-letter code: LexA repressor (228 aa).

A DNA-binding region (H-T-H motif) is located at residues 26 to 46; it reads FDEMKEALDLRSKSGIHRLIT. Residues serine 149 and lysine 187 each act as for autocatalytic cleavage activity in the active site.

The protein belongs to the peptidase S24 family. As to quaternary structure, homodimer.

It catalyses the reaction Hydrolysis of Ala-|-Gly bond in repressor LexA.. In terms of biological role, represses a number of genes involved in the response to DNA damage (SOS response), including recA and lexA. In the presence of single-stranded DNA, RecA interacts with LexA causing an autocatalytic cleavage which disrupts the DNA-binding part of LexA, leading to derepression of the SOS regulon and eventually DNA repair. The polypeptide is LexA repressor (Jannaschia sp. (strain CCS1)).